A 301-amino-acid chain; its full sequence is Phosphonates import ATP-binding protein PhnC (301 aa).

Residues 8–256 enclose the ABC transporter domain; the sequence is IRIERLSKTF…LLKTLYGDEA (249 aa). ATP is bound at residue 41–48; the sequence is GASGSGKS. Residues 264–287 are disordered; that stretch reads AQGPDDTESKNTADNTPLQDAAPA.

It belongs to the ABC transporter superfamily. Phosphonates importer (TC 3.A.1.9.1) family. The complex is composed of two ATP-binding proteins (PhnC), two transmembrane proteins (PhnE) and a solute-binding protein (PhnD).

The protein localises to the cell inner membrane. It carries out the reaction phosphonate(out) + ATP + H2O = phosphonate(in) + ADP + phosphate + H(+). Part of the ABC transporter complex PhnCDE involved in phosphonates import. Responsible for energy coupling to the transport system. This is Phosphonates import ATP-binding protein PhnC from Paraburkholderia xenovorans (strain LB400).